Reading from the N-terminus, the 185-residue chain is Elongation factor P (185 aa).

It belongs to the elongation factor P family.

The protein localises to the cytoplasm. Its pathway is protein biosynthesis; polypeptide chain elongation. Involved in peptide bond synthesis. Stimulates efficient translation and peptide-bond synthesis on native or reconstituted 70S ribosomes in vitro. Probably functions indirectly by altering the affinity of the ribosome for aminoacyl-tRNA, thus increasing their reactivity as acceptors for peptidyl transferase. The sequence is that of Elongation factor P from Azoarcus sp. (strain BH72).